The primary structure comprises 184 residues: ATP-dependent protease subunit HslV (184 aa).

Threonine 8 is an active-site residue. Residues glycine 165, aspartate 168, and threonine 171 each contribute to the Na(+) site.

Belongs to the peptidase T1B family. HslV subfamily. A double ring-shaped homohexamer of HslV is capped on each side by a ring-shaped HslU homohexamer. The assembly of the HslU/HslV complex is dependent on binding of ATP.

The protein resides in the cytoplasm. The catalysed reaction is ATP-dependent cleavage of peptide bonds with broad specificity.. With respect to regulation, allosterically activated by HslU binding. Protease subunit of a proteasome-like degradation complex believed to be a general protein degrading machinery. The chain is ATP-dependent protease subunit HslV from Pediococcus pentosaceus (strain ATCC 25745 / CCUG 21536 / LMG 10740 / 183-1w).